The chain runs to 1214 residues: BOS complex subunit NOMO1 (1214 aa).

Positions Met1–Gly23 are cleaved as a signal peptide. Topologically, residues Ser24–Gln1150 are extracellular. Asn42, Asn210, and Asn610 each carry an N-linked (GlcNAc...) asparagine glycan. A coiled-coil region spans residues Lys692–Glu720. Residues Thr708 to Ala726 are compositionally biased toward basic and acidic residues. Residues Thr708 to Met733 are disordered. The helical transmembrane segment at Gly1151–Tyr1167 threads the bilayer. Residues Asn1168–Thr1214 lie on the Cytoplasmic side of the membrane. A disordered region spans residues Gly1190–Thr1214. Phosphoserine occurs at positions 1196 and 1197. Residues Gln1205 to Thr1214 show a composition bias toward basic residues.

In terms of assembly, component of the back of Sec61 (BOS) complex, composed of NCLN/Nicalin, NOMO (NOMO1, NOMO2 or NOMO3) and TMEM147. The BOS complex is part of the multi-pass translocon (MPT) complex, composed of three subcomplexes, the GEL complex (composed of RAB5IF/OPTI and TMCO1), the BOS complex (composed of NCLN/Nicalin, NOMO and TMEM147) and the PAT complex (composed of WDR83OS/Asterix and CCDC47). The MPT complex associates with the SEC61 complex.

Its subcellular location is the endoplasmic reticulum membrane. In terms of biological role, component of the multi-pass translocon (MPT) complex that mediates insertion of multi-pass membrane proteins into the lipid bilayer of membranes. The MPT complex takes over after the SEC61 complex: following membrane insertion of the first few transmembrane segments of proteins by the SEC61 complex, the MPT complex occludes the lateral gate of the SEC61 complex to promote insertion of subsequent transmembrane regions. The polypeptide is BOS complex subunit NOMO1 (Mus musculus (Mouse)).